The chain runs to 285 residues: Bifunctional protein FolD (285 aa).

Residues 163 to 165, Ser188, and Ala231 contribute to the NADP(+) site; that span reads GRS.

Belongs to the tetrahydrofolate dehydrogenase/cyclohydrolase family. Homodimer.

The catalysed reaction is (6R)-5,10-methylene-5,6,7,8-tetrahydrofolate + NADP(+) = (6R)-5,10-methenyltetrahydrofolate + NADPH. It carries out the reaction (6R)-5,10-methenyltetrahydrofolate + H2O = (6R)-10-formyltetrahydrofolate + H(+). Its pathway is one-carbon metabolism; tetrahydrofolate interconversion. Its function is as follows. Catalyzes the oxidation of 5,10-methylenetetrahydrofolate to 5,10-methenyltetrahydrofolate and then the hydrolysis of 5,10-methenyltetrahydrofolate to 10-formyltetrahydrofolate. The sequence is that of Bifunctional protein FolD from Oenococcus oeni (strain ATCC BAA-331 / PSU-1).